The sequence spans 122 residues: Ribonuclease P protein component (122 aa).

The protein belongs to the RnpA family. In terms of assembly, consists of a catalytic RNA component (M1 or rnpB) and a protein subunit.

The enzyme catalyses Endonucleolytic cleavage of RNA, removing 5'-extranucleotides from tRNA precursor.. In terms of biological role, RNaseP catalyzes the removal of the 5'-leader sequence from pre-tRNA to produce the mature 5'-terminus. It can also cleave other RNA substrates such as 4.5S RNA. The protein component plays an auxiliary but essential role in vivo by binding to the 5'-leader sequence and broadening the substrate specificity of the ribozyme. This is Ribonuclease P protein component from Lactobacillus johnsonii (strain CNCM I-12250 / La1 / NCC 533).